A 155-amino-acid polypeptide reads, in one-letter code: Ribonuclease H (155 aa).

An RNase H type-1 domain is found at methionine 1–methionine 142. Residues aspartate 10, glutamate 48, aspartate 70, and aspartate 134 each coordinate Mg(2+).

It belongs to the RNase H family. As to quaternary structure, monomer. It depends on Mg(2+) as a cofactor.

It is found in the cytoplasm. The catalysed reaction is Endonucleolytic cleavage to 5'-phosphomonoester.. In terms of biological role, endonuclease that specifically degrades the RNA of RNA-DNA hybrids. The sequence is that of Ribonuclease H from Escherichia coli O127:H6 (strain E2348/69 / EPEC).